A 372-amino-acid polypeptide reads, in one-letter code: sn-glycerol-3-phosphate import ATP-binding protein UgpC (372 aa).

The region spanning 2–233 is the ABC transporter domain; it reads LDIQQLVKTY…PASTFVASFI (232 aa). Position 35-42 (35-42) interacts with ATP; it reads GPSGCGKS.

The protein belongs to the ABC transporter superfamily. sn-glycerol-3-phosphate importer (TC 3.A.1.1.3) family. In terms of assembly, the complex is composed of two ATP-binding proteins (UgpC), two transmembrane proteins (UgpA and UgpE) and a solute-binding protein (UgpB).

It localises to the cell inner membrane. It catalyses the reaction sn-glycerol 3-phosphate(out) + ATP + H2O = sn-glycerol 3-phosphate(in) + ADP + phosphate + H(+). Its function is as follows. Part of the ABC transporter complex UgpBAEC involved in sn-glycerol-3-phosphate (G3P) import. Responsible for energy coupling to the transport system. The polypeptide is sn-glycerol-3-phosphate import ATP-binding protein UgpC (Vibrio vulnificus (strain CMCP6)).